The chain runs to 358 residues: L-lysine 3-hydroxylase (358 aa).

Residues His178, Glu180, and His314 each contribute to the Fe cation site. Arg328 provides a ligand contact to 2-oxoglutarate.

It belongs to the clavaminate synthase family. The cofactor is Fe(2+).

The enzyme catalyses L-lysine + 2-oxoglutarate + O2 = (3S)-3-hydroxy-L-lysine + succinate + CO2. Alpha-ketoglutarate-dependent dioxygenase that in vitro catalyzes the regio- and stereoselective hydroxylation of L-lysine, leading to (3S)-3-hydroxy-L-lysine. Can also use (5R)-5-hydroxy-L-lysine as substrate, but neither D-lysine nor L-ornithine. The protein is L-lysine 3-hydroxylase of Catenulispora acidiphila (strain DSM 44928 / JCM 14897 / NBRC 102108 / NRRL B-24433 / ID139908).